Here is a 121-residue protein sequence, read N- to C-terminus: Ribonuclease P protein component (121 aa).

The protein belongs to the RnpA family. Consists of a catalytic RNA component (M1 or rnpB) and a protein subunit.

It carries out the reaction Endonucleolytic cleavage of RNA, removing 5'-extranucleotides from tRNA precursor.. RNaseP catalyzes the removal of the 5'-leader sequence from pre-tRNA to produce the mature 5'-terminus. It can also cleave other RNA substrates such as 4.5S RNA. The protein component plays an auxiliary but essential role in vivo by binding to the 5'-leader sequence and broadening the substrate specificity of the ribozyme. The chain is Ribonuclease P protein component from Alcanivorax borkumensis (strain ATCC 700651 / DSM 11573 / NCIMB 13689 / SK2).